The following is a 314-amino-acid chain: Olfactory receptor 2Z1 (314 aa).

The Extracellular portion of the chain corresponds to 1 to 25 (MGDVNQSVASDFILVGLFSHSGSRQ). Residue N5 is glycosylated (N-linked (GlcNAc...) asparagine). A helical membrane pass occupies residues 26–49 (LLFSLVAVMFVIGLLGNTVLLFLI). Residues 50–57 (RVDSRLHT) lie on the Cytoplasmic side of the membrane. A helical membrane pass occupies residues 58–79 (PMYFLLSQLSLFDIGCPMVTIP). Over 80–100 (KMASDFLRGEGATSYGGGAAQ) the chain is Extracellular. A helical membrane pass occupies residues 101–120 (IFFLTLMGVAEGVLLVLMSY). Residues 121 to 139 (DRYVAVCQPLQYPVLMRRQ) are Cytoplasmic-facing. The chain crosses the membrane as a helical span at residues 140-158 (VCLLMMGSSWVVGVLNASI). Topologically, residues 159-195 (QTSITLHFPYCASRIVDHFFCEVPALLKLSCADTCAY) are extracellular. A helical transmembrane segment spans residues 196–219 (EMALSTSGVLILMLPLSLIATSYG). At 220-236 (HVLQAVLSMRSEEARHK) the chain is on the cytoplasmic side. A helical transmembrane segment spans residues 237–259 (AVTTCSSHITVVGLFYGAAVFMY). The Extracellular portion of the chain corresponds to 260–272 (MVPCAYHSPQQDN). Residues 273–292 (VVSLFYSLVTPTLNPLIYSL) traverse the membrane as a helical segment. Residues 293-314 (RNPEVWMALVKVLSRAGLRQMC) lie on the Cytoplasmic side of the membrane.

It belongs to the G-protein coupled receptor 1 family.

The protein localises to the cell membrane. Functionally, odorant receptor. The sequence is that of Olfactory receptor 2Z1 (OR2Z1) from Homo sapiens (Human).